The sequence spans 470 residues: MNDFGIKNMDQVAPVASSYRGTLKRQAAFDTFDGSLLAVFPSLNEEQTLQEVPTGLDSISHDSANCELPLLTPCSKAVMSQALKATFSGFKKEQRRLGIPKNPWLWTEQQVCQWLLWATNEFSLVDVNLQRFGMTGQVLCNLGKERFLELAPDFVGDILWEHLEQMIKENQEKNEDQYEENSHLNSVPHWINSNSLGFGVEQAPYGMQTQSYPKGGLLDGLCPASSAPSTLGPEQDFQMFPKARLNTVSVNYCSVGQDFPAGSLNLLSSASGKPRDHDSAETGGDSFESSESLLQSWNSQSSLLDVQRVPSFESFEDDCSQSLGLSKPTMSFKDYIQDRSDPVEQGKPVIPAAVLAGFTGSGPIQLWQFLLELLSDKSCQSFISWTGDGWEFKLADPDEVARRWGKRKNKPKMNYEKLSRGLRYYYDKNIIHKTSGKRYVYRFVCDLQNLLGFTPEELHAILGVQPDTED.

One can recognise a PNT domain in the interval 85 to 170 (ATFSGFKKEQ…EHLEQMIKEN (86 aa)). At Ser225 the chain carries Phosphoserine. The tract at residues 270–291 (ASGKPRDHDSAETGGDSFESSE) is disordered. Phosphoserine is present on residues Ser296, Ser299, and Ser302. Positions 364 to 444 (IQLWQFLLEL…SGKRYVYRFV (81 aa)) form a DNA-binding region, ETS.

This sequence belongs to the ETS family. Phosphorylation by CDK10 at Ser-225 may create a phosphodegron that targets ETS2 for proteasomal degradation.

It localises to the nucleus. Functionally, transcription factor activating transcription. Binds specifically the GGA DNA motif in gene promoters and stimulates transcription of those genes. In Bos taurus (Bovine), this protein is Protein C-ets-2 (ETS2).